Reading from the N-terminus, the 239-residue chain is Large ribosomal subunit protein uL2 (239 aa).

Disordered regions lie at residues 1 to 28 (MGKR…VGPA) and 199 to 239 (SHPH…RRKG). The segment covering 225-239 (KVGHIAARRTGRRKG) has biased composition (basic residues).

The protein belongs to the universal ribosomal protein uL2 family. As to quaternary structure, part of the 50S ribosomal subunit. Forms a bridge to the 30S subunit in the 70S ribosome.

Its function is as follows. One of the primary rRNA binding proteins. Required for association of the 30S and 50S subunits to form the 70S ribosome, for tRNA binding and peptide bond formation. It has been suggested to have peptidyltransferase activity; this is somewhat controversial. Makes several contacts with the 16S rRNA in the 70S ribosome. This chain is Large ribosomal subunit protein uL2, found in Staphylothermus marinus (strain ATCC 43588 / DSM 3639 / JCM 9404 / F1).